A 499-amino-acid chain; its full sequence is Probable dipeptidase B (499 aa).

The active site involves C26.

The protein belongs to the peptidase C69 family.

The enzyme catalyses an L-aminoacyl-L-amino acid + H2O = 2 an L-alpha-amino acid. The sequence is that of Probable dipeptidase B (pepDB) from Streptococcus pyogenes serotype M6 (strain ATCC BAA-946 / MGAS10394).